An 808-amino-acid chain; its full sequence is Zinc finger protein 841 (808 aa).

A Glycyl lysine isopeptide (Lys-Gly) (interchain with G-Cter in SUMO2) cross-link involves residue Lys137. The C2H2-type 1; degenerate zinc finger occupies 145-167 (YIGNECGKAFRVSSSLINHQMIH). Residues 173–195 (YRCNESGKAFHRGSLLTVHQIVH) form a C2H2-type 2; degenerate zinc finger. 13 consecutive C2H2-type zinc fingers follow at residues 201–223 (YQCDVCGRIFRQNSDLVNHRRSH), 229–251 (YICNECGKSFSKSSHLAVHQRIH), 257–279 (YKCNRCGKCFSQSSSLATHQTVH), 285–307 (YKCNECGKTFKRNSSLTAHHIIH), 313–335 (YTCDVCGKVFYQNSQLVRHQIIH), 341–363 (YKCNECGKVFFQRSRLAGHRRIH), 369–391 (YKCNECGKVFSQHSHLAVHQRVH), 397–419 (YKCNECGKAFNWGSLLTVHQRIH), 425–447 (YKCNVCGKVFNYGGYLSVHMRCH), 453–475 (LHCNKCGMVFTYYSCLARHQRMH), 481–503 (YKCNVCGKVFIDSGNLSIHRRSH), 509–531 (FQCNECGKVFSYYSCLARHRKIH), and 537–559 (YKCNDCGKAYTQRSSLTKHLVIH). Glycyl lysine isopeptide (Lys-Gly) (interchain with G-Cter in SUMO2) cross-links involve residues Lys554 and Lys579. A C2H2-type 16; degenerate zinc finger spans residues 565-587 (YHCNEFGEAFIQSSKLARYHRNP). 7 consecutive C2H2-type zinc fingers follow at residues 593-615 (HKCSECGRTFSHKTSLVYHQRRH), 621-643 (YKCIECGKVFNSTTTLARHRRIH), 649-671 (YKCNECGKVFRYRSGLARHWSIH), 677-699 (YKCNECGKAFRVRSILLNHQMMH), 705-727 (YKCNECGKAFIERSNLVYHQRNH), 733-755 (YKCMECGKAFGRRSCLTKHQRIH), and 761-783 (YKCNECGKSYISRSGLTKHQIKH). A Glycyl lysine isopeptide (Lys-Gly) (interchain with G-Cter in SUMO2) cross-link involves residue Lys791.

This sequence belongs to the krueppel C2H2-type zinc-finger protein family.

It is found in the nucleus. May be involved in transcriptional regulation. The polypeptide is Zinc finger protein 841 (ZNF841) (Homo sapiens (Human)).